Reading from the N-terminus, the 866-residue chain is Protein translocase subunit SecA (866 aa).

Residues Gln-87, 105–109, and Asp-514 contribute to the ATP site; that span reads GEGKT. A disordered region spans residues 819 to 858; that stretch reads VSPIGTPSSEGGGETSGADTYSNKKIGRNDPCPCGSGKKY. Zn(2+)-binding residues include Cys-850, Cys-852, Cys-861, and Cys-862.

The protein belongs to the SecA family. As to quaternary structure, monomer and homodimer. Part of the essential Sec protein translocation apparatus which comprises SecA, SecYEG and auxiliary proteins SecDF. Other proteins may also be involved. Requires Zn(2+) as cofactor.

It is found in the cell inner membrane. The protein resides in the cytoplasm. It catalyses the reaction ATP + H2O + cellular proteinSide 1 = ADP + phosphate + cellular proteinSide 2.. In terms of biological role, part of the Sec protein translocase complex. Interacts with the SecYEG preprotein conducting channel. Has a central role in coupling the hydrolysis of ATP to the transfer of proteins into and across the cell membrane, serving as an ATP-driven molecular motor driving the stepwise translocation of polypeptide chains across the membrane. This Elusimicrobium minutum (strain Pei191) protein is Protein translocase subunit SecA.